Here is a 144-residue protein sequence, read N- to C-terminus: Transcription antitermination protein NusB (144 aa).

Belongs to the NusB family.

Functionally, involved in transcription antitermination. Required for transcription of ribosomal RNA (rRNA) genes. Binds specifically to the boxA antiterminator sequence of the ribosomal RNA (rrn) operons. The sequence is that of Transcription antitermination protein NusB from Dictyoglomus thermophilum (strain ATCC 35947 / DSM 3960 / H-6-12).